Consider the following 305-residue polypeptide: uncharacterized protein (305 aa).

A disordered region spans residues 53–185 (SGRIGDGDDG…TGPRSSRTVG (133 aa)). 2 stretches are compositionally biased toward basic and acidic residues: residues 95–116 (VEERNLVDRCNRMMNETEERPT) and 128–142 (GSERNGETERPRSEG). Polar residues predominate over residues 161 to 171 (GNTQAPSQSAE). Residues 260–302 (CAICMSNFIKNQRLRVLPCDHRFHVGCVDKWLLGHSNKCPVCR) form an RING-type; atypical zinc finger.

This is an uncharacterized protein from Encephalitozoon cuniculi (strain GB-M1) (Microsporidian parasite).